Here is a 316-residue protein sequence, read N- to C-terminus: N-acetyl-gamma-glutamyl-phosphate reductase (316 aa).

Residue Cys136 is part of the active site.

Belongs to the NAGSA dehydrogenase family. Type 1 subfamily.

It is found in the cytoplasm. The catalysed reaction is N-acetyl-L-glutamate 5-semialdehyde + phosphate + NADP(+) = N-acetyl-L-glutamyl 5-phosphate + NADPH + H(+). It participates in amino-acid biosynthesis; L-arginine biosynthesis; N(2)-acetyl-L-ornithine from L-glutamate: step 3/4. Its function is as follows. Catalyzes the NADPH-dependent reduction of N-acetyl-5-glutamyl phosphate to yield N-acetyl-L-glutamate 5-semialdehyde. The chain is N-acetyl-gamma-glutamyl-phosphate reductase from Xanthomonas euvesicatoria pv. vesicatoria (strain 85-10) (Xanthomonas campestris pv. vesicatoria).